Consider the following 195-residue polypeptide: SAGA-associated factor 11 homolog (195 aa).

The disordered stretch occupies residues 1–22 (MSAANMPTTTGAQGSGNQVPRT). An SGF11-type zinc finger spans residues 105 to 126 (CTCPNCDRLVAAARFAPHLEKC). The disordered stretch occupies residues 140–195 (RLATKEGATSAHLHSSGNTGGTDDEDDVDWSSDKRRKKSNQNSRNNGSKKNNGKTF). The residue at position 171 (Ser-171) is a Phosphoserine. The segment covering 179–195 (NQNSRNNGSKKNNGKTF) has biased composition (low complexity).

This sequence belongs to the SGF11 family. Component of some SAGA transcription coactivator-HAT complexes, at least composed of Ada2b, not/nonstop, Pcaf/Gcn5, Sgf11 and Spt3. Within the SAGA complex, Sgf11, e(y)2, and not/nonstop form an additional subcomplex of SAGA called the DUB module (deubiquitination module). Interacts directly with not/nonstop. Interacts with the AMEX complex component xmas-2. Interacts with Cbp80; important for promoter recruitment of Sgf11 that is not associated with the DUB module.

Its subcellular location is the nucleus. It is found in the nucleoplasm. The protein localises to the cytoplasm. Its function is as follows. Component of the transcription regulatory histone acetylation (HAT) complex SAGA, a multiprotein complex that activates transcription by remodeling chromatin and mediating histone acetylation and deubiquitination. Within the SAGA complex, participates in a subcomplex that specifically deubiquitinates histone H2B. The SAGA complex is recruited to specific gene promoters by activators, where it is required for transcription. Required for nuclear receptor-mediated transactivation. Binds independently on SAGA to promoters in an RNA-dependent manner. Binds to mRNA and is essential for total mRNA export from the nucleus. Required to counteract heterochromatin silencing. Controls the development of neuronal connectivity in visual system by being required for accurate axon targeting in the optic lobe. Required for expression of ecdysone-induced genes such as br/broad. The chain is SAGA-associated factor 11 homolog from Drosophila sechellia (Fruit fly).